The chain runs to 286 residues: Short-chain dehydrogenase fogD (286 aa).

Val-8, Thr-34, Asp-55, Tyr-147, Lys-151, Val-180, and Thr-182 together coordinate NADP(+). Tyr-147 functions as the Proton acceptor in the catalytic mechanism. Residue Lys-151 is the Lowers pKa of active site Tyr of the active site.

Belongs to the short-chain dehydrogenases/reductases (SDR) family.

It functions in the pathway secondary metabolite biosynthesis. Functionally, short-chain dehydrogenase; part of the gene cluster that mediates the biosynthesis of flavoglaucin and congeners (including aspergin, dihydroauroglaucin and auroglaucin), prenylated salicylaldehyde derivatives carrying a saturated or an unsaturated C-7 side chain. The PKS fogA releases the carboxylic acid (8E,10E,12E)-3,5,7-trihydroxytetradeca-8,10,12-trienoic acid as its product, as well as derivatives with one and two double bonds. FogA is indeed able to reduce the initial triketide, thus being at least partially responsible for the differently saturated heptyl side chains of flavoglaucin congeners. The oxidoreductases fogB, fogC and fogD modify the nascent polyketide in fogA-bound form and, together, fogA, fogB, fogC and fogD are necessary for the formation of the aromatic core and the cyclized PKS products are released as salicyl alcohols. In particular, fogB is responsible for oxidation of a hydroxyl group or reduction of remaining double bond(s) at the C-7 residue whereas fogD is probably involved in the reductive release of the modified PKS products. The cytochrome P450 monooxygenase fogE is then responsible for the hydroxylation at C-3 of the benzene ring. The fogE products are substrates of the prenyltransferase fogH and the prenylated benzyl alcohols are subsequently oxidized by the fogF to produce the final aryl aldehydes flavoglaucin and congeners. The short-chain dehydrogenase fogG does not seem to be involved in the biosynthesis of the prenylated salicylaldehyde derivatives. In Aspergillus ruber (strain CBS 135680), this protein is Short-chain dehydrogenase fogD.